The following is a 58-amino-acid chain: Light-harvesting protein B-875 alpha chain (58 aa).

Over 1 to 15 (MSKFYKIWMIFDPRR) the chain is Cytoplasmic. Residues 16–36 (VFVAQGVFLFLLAVMIHLILL) form a helical membrane-spanning segment. H32 provides a ligand contact to a bacteriochlorophyll. The Periplasmic portion of the chain corresponds to 37–58 (STPSYNWLEISAAKYNRVAVAE).

Belongs to the antenna complex alpha subunit family. As to quaternary structure, the core complex is formed by different alpha and beta chains, binding bacteriochlorophyll molecules, and arranged most probably in tetrameric structures disposed around the reaction center. The non-pigmented gamma chains may constitute additional components.

Its subcellular location is the cell inner membrane. Functionally, antenna complexes are light-harvesting systems, which transfer the excitation energy to the reaction centers. This chain is Light-harvesting protein B-875 alpha chain (pufA), found in Cereibacter sphaeroides (strain ATCC 17023 / DSM 158 / JCM 6121 / CCUG 31486 / LMG 2827 / NBRC 12203 / NCIMB 8253 / ATH 2.4.1.) (Rhodobacter sphaeroides).